Reading from the N-terminus, the 832-residue chain is Protein PPP4R3C (832 aa).

A disordered region spans residues 708–832 (RTQEGEAVMP…SPKKKPHLSS (125 aa)). Basic and acidic residues-rich tracts occupy residues 725-735 (FTETKRTHQEG) and 749-765 (METKRNQEHEGKVDSPK). Low complexity predominate over residues 769-779 (SGDFKFSSSYS). Acidic residues predominate over residues 801–820 (PDDEEEKEEDEEEKEEDKED).

This sequence belongs to the SMEK family.

The polypeptide is Protein PPP4R3C (Homo sapiens (Human)).